The chain runs to 255 residues: Homeobox protein DLX-1 (255 aa).

The span at Met-1–Val-14 shows a compositional bias: polar residues. Disordered stretches follow at residues Met-1–Gly-38 and Ser-95–Glu-118. The span at Pro-25–Ser-36 shows a compositional bias: low complexity. A compositionally biased stretch (basic and acidic residues) spans Arg-100 to Thr-112. Residues Ile-128–Met-187 constitute a DNA-binding region (homeobox). The disordered stretch occupies residues Ala-204–Ala-230.

Belongs to the distal-less homeobox family. Interacts with SMAD4 (via homeobox DNA-binding domain). Interacts (via homeobox DNA-binding domain) with POU4F2; this interaction suppresses DLX1-mediated transcriptional activity in postnatal retina and enhances retinal ganglion cell (RGC) differentiation. As to expression, expressed in hematopoietic cell lines.

The protein localises to the nucleus. Its function is as follows. Plays a role as a transcriptional activator or repressor. Inhibits several cytokine signaling pathways, such as TGFB1, activin-A/INHBA and BMP4 by interfering with the transcriptional stimulatory activity of transcription factors, such as MSX2, FAST2, SMAD2 and SMAD3 during hematopoietic cell differentiation. Plays a role in terminal differentiation of interneurons, such as amacrine and bipolar cells in the developing retina. Likely to play a regulatory role in the development of the ventral forebrain. May play a role in craniofacial patterning and morphogenesis and may be involved in the early development of diencephalic subdivisions. The protein is Homeobox protein DLX-1 (DLX1) of Homo sapiens (Human).